We begin with the raw amino-acid sequence, 178 residues long: Phosphopantetheine adenylyltransferase (178 aa).

Ser-8 contacts substrate. ATP-binding positions include 8–9 (SF) and His-16. Residues Lys-40, Thr-72, and Arg-86 each contribute to the substrate site. Residues 87 to 89 (GLR), Glu-97, and 122 to 128 (YSFLSSS) contribute to the ATP site.

It belongs to the bacterial CoaD family. As to quaternary structure, homohexamer. Mg(2+) serves as cofactor.

Its subcellular location is the cytoplasm. It carries out the reaction (R)-4'-phosphopantetheine + ATP + H(+) = 3'-dephospho-CoA + diphosphate. It participates in cofactor biosynthesis; coenzyme A biosynthesis; CoA from (R)-pantothenate: step 4/5. Functionally, reversibly transfers an adenylyl group from ATP to 4'-phosphopantetheine, yielding dephospho-CoA (dPCoA) and pyrophosphate. This is Phosphopantetheine adenylyltransferase from Picosynechococcus sp. (strain ATCC 27264 / PCC 7002 / PR-6) (Agmenellum quadruplicatum).